The sequence spans 210 residues: Somatotropin (210 aa).

An N-terminal signal peptide occupies residues 1–23; it reads MARVLVLLSVVLVSLLVNQGRAS. Residue H38 participates in Zn(2+) binding. The cysteines at positions 71 and 183 are disulfide-linked. Residue E192 participates in Zn(2+) binding. C200 and C208 form a disulfide bridge.

It belongs to the somatotropin/prolactin family.

The protein localises to the secreted. In terms of biological role, growth hormone plays an important role in growth control. The chain is Somatotropin (gh) from Cyprinus carpio (Common carp).